Reading from the N-terminus, the 395-residue chain is ATP phosphoribosyltransferase regulatory subunit (395 aa).

It belongs to the class-II aminoacyl-tRNA synthetase family. HisZ subfamily. As to quaternary structure, heteromultimer composed of HisG and HisZ subunits.

It is found in the cytoplasm. The protein operates within amino-acid biosynthesis; L-histidine biosynthesis; L-histidine from 5-phospho-alpha-D-ribose 1-diphosphate: step 1/9. Functionally, required for the first step of histidine biosynthesis. May allow the feedback regulation of ATP phosphoribosyltransferase activity by histidine. This chain is ATP phosphoribosyltransferase regulatory subunit, found in Stutzerimonas stutzeri (Pseudomonas stutzeri).